Here is a 96-residue protein sequence, read N- to C-terminus: MAFNVITFLQFSVFVVILFNINLHSASAGSKGSSASQSSDNSVVAKFCDTNCTINEGGKWTECKGGCFCVHVGNETVGRCMKLDGDYDYPSPKPEE.

An N-terminal signal peptide occupies residues 1–28 (MAFNVITFLQFSVFVVILFNINLHSASA). 3 disulfide bridges follow: cysteine 48-cysteine 67, cysteine 52-cysteine 69, and cysteine 63-cysteine 80. Residue asparagine 51 is glycosylated (N-linked (GlcNAc...) asparagine). Asparagine 74 carries an N-linked (GlcNAc...) asparagine glycan.

The protein resides in the secreted. Its function is as follows. Salivary chemokine-binding protein which binds to host chemokines CXCL1, CXCL2, CXCL3, CXCL5, CXCL6, CXCL10, CXCL11 and CXCL13. This is Evasin P1100 from Ixodes ricinus (Common tick).